The chain runs to 63 residues: Jingdongin-1 (63 aa).

Residues 1-22 (MLTLKKSMLLLFFLGTINLSLC) form the signal peptide. A propeptide spanning residues 23 to 44 (EQERDADEEERRDDDEMDVEVE) is cleaved from the precursor. C57 and C63 form a disulfide bridge.

In terms of tissue distribution, expressed by the skin glands.

It is found in the secreted. In terms of biological role, the synthetic peptide has antimicrobial activity against Gram-negative bacterium B.dysenteriae (MIC=35 ug/ml), against Gram-positive bacteria S.aureus ATCC 2592 (MIC=4.7 ug/ml) and B.subtilis ATCC 6633 (MIC=9.38 ug/ml) and against fungus C.albicans (MIC=18.75 ug/ml). Has no activity against Gram-negative bacterium E.coli ATCC 25922 but exhibits low hemolytic activity at concentrations up to 200 ug/ml. The polypeptide is Jingdongin-1 (Amolops jingdongensis (Chinese torrent frog)).